The following is a 457-amino-acid chain: MIKEYKSIQEVAGPLMLINGVEGVKFDELGEIELSNGEIRRCKVLEVNGDTALVQLFESSTGINLAESKVRFLGKSLDFGVSPDILGRVFSGMGRPIDGGPEIIPDKRLDINGAPINPAARDYPAEFIQTGVSAIDGLNTLVRGQKLPIFSGSGLPHANLAVQIARQAKVRGTDSKFAVVFAAVGITFEDAEFFISDFKATGAIDRSVVFVNLANDPAVERVSTPRMALTAAEYLAFEQDMHVLVIITDITNYAEALREVSAAKKEVPGRRGYPGYLYTDLATMYERAGKMKGHEGSITMIPILTMPEDDKTHPIPDLTGYITEGQIILSRELYKKDIQPPIDVLPSLSRLKDKGIGKGKTREDHADTMNQLFAAYSRGKDAKELMAILGESALSEIDLMYAKFADEFEKEYVSQGFRTDRTIEQTLEIGWKLLSMLPKSELKRIRDEYFEKYMPKE.

The protein belongs to the ATPase alpha/beta chains family.

Functionally, produces ATP from ADP in the presence of a proton gradient across the membrane. The V-type beta chain is a regulatory subunit. This chain is V-type ATP synthase beta chain, found in Clostridioides difficile (strain 630) (Peptoclostridium difficile).